The sequence spans 113 residues: Biotrophy-associated secreted protein 3 (113 aa).

The N-terminal stretch at 1–20 is a signal peptide; the sequence is MQFSTVSFAIFAILPAMVAA.

The protein resides in the secreted. Secreted effector involved in biotrophic colonization of plant cells. This Pyricularia oryzae (strain 70-15 / ATCC MYA-4617 / FGSC 8958) (Rice blast fungus) protein is Biotrophy-associated secreted protein 3.